The primary structure comprises 398 residues: Minor capsid protein (398 aa).

Residues 359–398 (EEASVTSTEETLTPAQEAARTRAANKARKEAELAAATAEQ) form a disordered region. A compositionally biased stretch (polar residues) spans 362-372 (SVTSTEETLTP). Positions 373-382 (AQEAARTRAA) are enriched in low complexity.

The protein belongs to the T7virus minor capsid protein family. As to quaternary structure, interacts with the connector protein and the major capsid protein.

Its subcellular location is the virion. Functionally, assembles with the major capsid protein to form an icosahedral capsid with a T=7 symmetry, about 60 nm in diameter, and consisting of 415 capsid proteins. The major and minor capsid proteins are incorporated into the capsid in about a 90/10 ratio respectively. Once the capsid formed, encapsidates one single copy of the viral genome. This is Minor capsid protein from Escherichia coli (Bacteriophage T7).